The chain runs to 188 residues: Pyridoxal 5'-phosphate synthase subunit PdxT (188 aa).

An L-glutamine-binding site is contributed by 47 to 49; that stretch reads GES. Cys-79 (nucleophile) is an active-site residue. L-glutamine is bound by residues Arg-106 and 134–135; that span reads IR. Residues His-169 and Glu-171 each act as charge relay system in the active site.

It belongs to the glutaminase PdxT/SNO family. In the presence of PdxS, forms a dodecamer of heterodimers. Only shows activity in the heterodimer.

The catalysed reaction is aldehydo-D-ribose 5-phosphate + D-glyceraldehyde 3-phosphate + L-glutamine = pyridoxal 5'-phosphate + L-glutamate + phosphate + 3 H2O + H(+). The enzyme catalyses L-glutamine + H2O = L-glutamate + NH4(+). It functions in the pathway cofactor biosynthesis; pyridoxal 5'-phosphate biosynthesis. In terms of biological role, catalyzes the hydrolysis of glutamine to glutamate and ammonia as part of the biosynthesis of pyridoxal 5'-phosphate. The resulting ammonia molecule is channeled to the active site of PdxS. This is Pyridoxal 5'-phosphate synthase subunit PdxT from Caldicellulosiruptor saccharolyticus (strain ATCC 43494 / DSM 8903 / Tp8T 6331).